The following is a 149-amino-acid chain: Deoxyuridine 5'-triphosphate nucleotidohydrolase (149 aa).

Substrate-binding positions include 68 to 70 (RSG), asparagine 81, 85 to 87 (LID), and methionine 95.

It belongs to the dUTPase family. Mg(2+) is required as a cofactor.

The enzyme catalyses dUTP + H2O = dUMP + diphosphate + H(+). It participates in pyrimidine metabolism; dUMP biosynthesis; dUMP from dCTP (dUTP route): step 2/2. In terms of biological role, this enzyme is involved in nucleotide metabolism: it produces dUMP, the immediate precursor of thymidine nucleotides and it decreases the intracellular concentration of dUTP so that uracil cannot be incorporated into DNA. The chain is Deoxyuridine 5'-triphosphate nucleotidohydrolase from Janthinobacterium sp. (strain Marseille) (Minibacterium massiliensis).